The primary structure comprises 252 residues: 3-dehydroquinate dehydratase (252 aa).

Residues S21, 46–48 (EWR), and R82 contribute to the 3-dehydroquinate site. H143 functions as the Proton donor/acceptor in the catalytic mechanism. Catalysis depends on K170, which acts as the Schiff-base intermediate with substrate. Positions 213, 232, and 236 each coordinate 3-dehydroquinate.

This sequence belongs to the type-I 3-dehydroquinase family. As to quaternary structure, homodimer.

The enzyme catalyses 3-dehydroquinate = 3-dehydroshikimate + H2O. It participates in metabolic intermediate biosynthesis; chorismate biosynthesis; chorismate from D-erythrose 4-phosphate and phosphoenolpyruvate: step 3/7. Its function is as follows. Involved in the third step of the chorismate pathway, which leads to the biosynthesis of aromatic amino acids. Catalyzes the cis-dehydration of 3-dehydroquinate (DHQ) and introduces the first double bond of the aromatic ring to yield 3-dehydroshikimate. This chain is 3-dehydroquinate dehydratase, found in Escherichia coli O8 (strain IAI1).